The chain runs to 367 residues: Popeye domain-containing protein 2 (367 aa).

The N-linked (GlcNAc...) asparagine glycan is linked to Asn-4. A run of 2 helical transmembrane segments spans residues 36 to 56 (FLLM…LFGI) and 77 to 97 (IVLW…QLVY). Disordered regions lie at residues 273-292 (PSAS…ALEA) and 312-367 (APPA…TPEL). The span at 278-290 (GEPESEKDDEEAL) shows a compositional bias: acidic residues. Over residues 344–356 (PLQNSSQVMSRSQ) the composition is skewed to polar residues. The N-linked (GlcNAc...) asparagine glycan is linked to Asn-347. At Thr-364 the chain carries Phosphothreonine.

This sequence belongs to the popeye family. In terms of tissue distribution, expressed in the developing and adult heart, with high expression levels in the sinus and atrioventricular nodes. Also expressed in the bladder and skeletal muscle.

It localises to the membrane. The protein resides in the cell membrane. It is found in the sarcolemma. In terms of biological role, important for the maintenance of cardiac function. Plays a regulatory function in heart rate dynamics mediated, at least in part, through cAMP-binding and, probably, by increasing cell surface expression of the potassium channel KCNK2 and enhancing current density. The chain is Popeye domain-containing protein 2 (Popdc2) from Mus musculus (Mouse).